The primary structure comprises 363 residues: Dihydroorotate dehydrogenase (quinone) (363 aa).

Residues 62-66 and threonine 86 each bind FMN; that span reads AGYDK. Residue lysine 66 participates in substrate binding. Position 111-115 (111-115) interacts with substrate; the sequence is NRLGF. Asparagine 140 and asparagine 171 together coordinate FMN. Asparagine 171 lines the substrate pocket. Catalysis depends on serine 174, which acts as the Nucleophile. Residue asparagine 176 participates in substrate binding. Positions 216 and 244 each coordinate FMN. Position 245 to 246 (245 to 246) interacts with substrate; that stretch reads NT. FMN contacts are provided by residues glycine 266, glycine 295, and 316–317; that span reads YT.

Belongs to the dihydroorotate dehydrogenase family. Type 2 subfamily. In terms of assembly, monomer. FMN serves as cofactor.

Its subcellular location is the cell membrane. It carries out the reaction (S)-dihydroorotate + a quinone = orotate + a quinol. It participates in pyrimidine metabolism; UMP biosynthesis via de novo pathway; orotate from (S)-dihydroorotate (quinone route): step 1/1. Catalyzes the conversion of dihydroorotate to orotate with quinone as electron acceptor. The sequence is that of Dihydroorotate dehydrogenase (quinone) from Chelativorans sp. (strain BNC1).